Here is a 375-residue protein sequence, read N- to C-terminus: MICPVIELAQQLIKRPSLSPSDAGCQEIMIQRLAAIGFTIEPMNFGDTLNFWAWRGEGETLAFAGHTDVVPTGDESHWHSPPFEPTIRDGMLYGRGAADMKGSLAAMIVAAERFVAAHPDHKGRLAFMITSDEEAKAINGTVKVVEALMARHERLDYCLVGEPSSTDRVGDIVKNGRRGSITANLRIHGVQGHVAYPHLADNPVHRAMPALNELVATQWDEGNAFFPATSMQIANLQAGTGSNNVIPGEFYVQFNFRFSTELTDSLIKQRVAALLDRHQLDYTLEWVLSGQPFLTAKGALVDAVVNAVKHYTEITPQLLTTGGTSDGRFIALMGAQVVELGPVNATIHKVNECVSAADLQLLSRMYQKIMEQLIA.

H66 contacts Zn(2+). D68 is a catalytic residue. Position 99 (D99) interacts with Zn(2+). E133 functions as the Proton acceptor in the catalytic mechanism. E134, E162, and H348 together coordinate Zn(2+).

The protein belongs to the peptidase M20A family. DapE subfamily. Homodimer. The cofactor is Zn(2+). It depends on Co(2+) as a cofactor.

The catalysed reaction is N-succinyl-(2S,6S)-2,6-diaminopimelate + H2O = (2S,6S)-2,6-diaminopimelate + succinate. It functions in the pathway amino-acid biosynthesis; L-lysine biosynthesis via DAP pathway; LL-2,6-diaminopimelate from (S)-tetrahydrodipicolinate (succinylase route): step 3/3. In terms of biological role, catalyzes the hydrolysis of N-succinyl-L,L-diaminopimelic acid (SDAP), forming succinate and LL-2,6-diaminopimelate (DAP), an intermediate involved in the bacterial biosynthesis of lysine and meso-diaminopimelic acid, an essential component of bacterial cell walls. This is Succinyl-diaminopimelate desuccinylase from Yersinia pseudotuberculosis serotype O:1b (strain IP 31758).